Consider the following 427-residue polypeptide: MSVSFENKETNRGVLTFTISQDQIKPELDRVFKSVKKSLNVPGFRKGHLPRPIFDKKFGEESLYQDVMNALLPNAYEAAVKEAGLEVVAQPKIDVTSMEKGQDWVITAEVVTKPEVKLGDYKNLEVSVDVEKEVTDADVEERIERERNNLAELVIKEAAAENGDTVVIDFVGSIDGVEFDGGKGENFSLGLGSGQFIPGFEDQLVGHSAGETVDVIVTFPEDYQAEDLAGKEAQFVTTIHEVKAKEVPALDDELAKDIDEEVETLADLKEKYRKELAAAKEEAYKDAVEGAAIDTAVENAEIVELPEEMIHEEVHRSVNEFLGNLQRQGINPDMYFQITGTTQEDLHNQYQAEAESRTKTNLVIEAVAKAEGFDASEEEIQKEVEQLAADYNMEVAQVQNLLSADMLKHDITIKKAVELITSTATVK.

Positions 163-248 constitute a PPIase FKBP-type domain; the sequence is GDTVVIDFVG…IHEVKAKEVP (86 aa).

The protein belongs to the FKBP-type PPIase family. Tig subfamily.

It is found in the cytoplasm. It carries out the reaction [protein]-peptidylproline (omega=180) = [protein]-peptidylproline (omega=0). Its function is as follows. Involved in protein export. Acts as a chaperone by maintaining the newly synthesized protein in an open conformation. Functions as a peptidyl-prolyl cis-trans isomerase. The protein is Trigger factor of Streptococcus pneumoniae (strain Hungary19A-6).